We begin with the raw amino-acid sequence, 220 residues long: UPF0319 protein Asuc_1002 (220 aa).

An N-terminal signal peptide occupies residues 1 to 21; it reads MKFRLAAVAAAALLASSASFA.

The protein belongs to the UPF0319 family.

The chain is UPF0319 protein Asuc_1002 from Actinobacillus succinogenes (strain ATCC 55618 / DSM 22257 / CCUG 43843 / 130Z).